We begin with the raw amino-acid sequence, 479 residues long: Altronate oxidoreductase (479 aa).

18-29 (IIQFGEGNFLRA) provides a ligand contact to NAD(+).

Belongs to the mannitol dehydrogenase family. UxaB subfamily.

It catalyses the reaction D-altronate + NAD(+) = keto-D-tagaturonate + NADH + H(+). It participates in carbohydrate metabolism; pentose and glucuronate interconversion. This is Altronate oxidoreductase from Phocaeicola vulgatus (strain ATCC 8482 / DSM 1447 / JCM 5826 / CCUG 4940 / NBRC 14291 / NCTC 11154) (Bacteroides vulgatus).